A 572-amino-acid polypeptide reads, in one-letter code: Proline--tRNA ligase (572 aa).

The protein belongs to the class-II aminoacyl-tRNA synthetase family. ProS type 1 subfamily. Homodimer.

The protein resides in the cytoplasm. It carries out the reaction tRNA(Pro) + L-proline + ATP = L-prolyl-tRNA(Pro) + AMP + diphosphate. Catalyzes the attachment of proline to tRNA(Pro) in a two-step reaction: proline is first activated by ATP to form Pro-AMP and then transferred to the acceptor end of tRNA(Pro). As ProRS can inadvertently accommodate and process non-cognate amino acids such as alanine and cysteine, to avoid such errors it has two additional distinct editing activities against alanine. One activity is designated as 'pretransfer' editing and involves the tRNA(Pro)-independent hydrolysis of activated Ala-AMP. The other activity is designated 'posttransfer' editing and involves deacylation of mischarged Ala-tRNA(Pro). The misacylated Cys-tRNA(Pro) is not edited by ProRS. The polypeptide is Proline--tRNA ligase (Edwardsiella ictaluri (strain 93-146)).